The following is a 558-amino-acid chain: MAEFIYTMKKVRKAHGDKVILDDVTLSFYPGAKIGVVGPNGAGKSSVLRIMAGLDKPNNGDAFLATGATVGILQQEPPLNEDKTVRGNVEEGMGDIKIKLDRFNEVAELMATDYTDELMEEMGRLQEELDHADAWDLDAQLEQAMDALRCPPADEPVTNLSGGERRRVALCKLLLSKPDLLLLDEPTNHLDAESVQWLEQHLASYPGAILAVTHDRYFLDNVAEWILELDRGRAYPYEGNYSTYLEKKAERLAVQGRKDAKLQKRLTEELAWVRSGAKARQAKSKARLQRYEEMAAEAEKTRKLDFEEIQIPVGPRLGNVVVEVDHLDKGYDGRALIKDLSFSLPRNGIVGVIGPNGVGKTTLFKTIVGLETPDSGSVKVGETVKLSYVDQARAGIDPRKTVWEVVSDGLDYIQVGQTEVPSRAYVSAFGFKGPDQQKPAGVLSGGERNRLNLALTLKQGGNLILLDEPTNDLDVETLGSLENALLNFPGCAVVISHDRWFLDRTCTHILAWEGDDDNEAKWFWFEGNFGAYEENKVERLGVDAARPHRVTHRKLTRG.

ABC transporter domains follow at residues 6–256 (YTMK…AVQG) and 322–552 (VEVD…RVTH). An ATP-binding site is contributed by 38-45 (GPNGAGKS). Residues 94 to 136 (GDIKIKLDRFNEVAELMATDYTDELMEEMGRLQEELDHADAWD) are arm. Residues 239-320 (GNYSTYLEKK…IPVGPRLGNV (82 aa)) form a ptIM region. 354–361 (GPNGVGKT) provides a ligand contact to ATP.

The protein belongs to the ABC transporter superfamily. ABCF family. Translational throttle EttA subfamily. As to quaternary structure, monomer. Probably contacts ribosomal proteins L1, L5, L33 and S7, the 16S and 23S rRNA and the P-site containing tRNA(fMet).

It localises to the cytoplasm. It carries out the reaction ATP + H2O = ADP + phosphate + H(+). Functionally, a translation factor that gates the progression of the 70S ribosomal initiation complex (IC, containing tRNA(fMet) in the P-site) into the translation elongation cycle by using a mechanism sensitive to the ATP/ADP ratio. Binds to the 70S ribosome E-site where it modulates the state of the translating ribosome during subunit translocation. ATP hydrolysis probably frees it from the ribosome, which can enter the elongation phase. The sequence is that of Energy-dependent translational throttle protein EttA from Mycobacterium tuberculosis (strain CDC 1551 / Oshkosh).